The chain runs to 204 residues: Ras-related protein R-Ras2 (204 aa).

Residue A2 is modified to N-acetylalanine. 21-29 provides a ligand contact to GTP; sequence GGGGVGKSA. The Effector region motif lies at 43–51; sequence YDPTIEDSY. GTP contacts are provided by residues 68–72, 127–130, and 157–159; these read DTAGQ, NKAD, and SAK. S186 is modified (phosphoserine). 4 N6-palmitoyl lysine lipidation sites follow: K192, K194, K196, and K197. C199 carries the S-palmitoyl cysteine lipid modification. Cysteine methyl ester is present on C201. Residue C201 is the site of S-farnesyl cysteine attachment. The propeptide at 202–204 is removed in mature form; the sequence is VIF.

Belongs to the small GTPase superfamily. Ras family. Interacts with RASSF5. Post-translationally, may be post-translationally modified by both palmitoylation and polyisoprenylation. Fatty-acylation at Lys-192, Lys-194; lys-196 and Lys-197 is required for localization to the plasma membrane and activity. Defatty-acylated by SIRT6, affecting its localization to the plasma membrane. In terms of tissue distribution, ubiquitously present in all tissues examined, with the highest levels in heart, placenta, and skeletal muscle. Moderate levels in lung and liver; low levels in brain, kidney, and pancreas.

It is found in the cell membrane. It localises to the golgi apparatus membrane. It carries out the reaction GTP + H2O = GDP + phosphate + H(+). GTP-binding protein with GTPase activity, involved in the regulation of MAPK signaling pathway and thereby controlling multiple cellular processes. Regulates craniofacial development. This chain is Ras-related protein R-Ras2, found in Homo sapiens (Human).